A 955-amino-acid polypeptide reads, in one-letter code: MAM domain-containing glycosylphosphatidylinositol anchor protein 1 (955 aa).

The N-terminal stretch at 1–18 (MEVTCLLLLALIPFHCRG) is a signal peptide. Ig-like domains lie at 24–123 (PAQA…KSIR) and 132–230 (PMLT…KAIT). N-linked (GlcNAc...) asparagine glycosylation is found at N42 and N90. 2 disulfide bridges follow: C60-C108 and C157-C214. N-linked (GlcNAc...) asparagine glycans are attached at residues N235, N247, N257, N307, and N331. Positions 240–323 (PALKLSVNET…VGNPAKKTVN (84 aa)) constitute an Ig-like 3 domain. C262 and C308 are disulfide-bonded. 3 Ig-like domains span residues 338–432 (PDVI…VEVN), 440–532 (PTIS…AQVQ), and 539–631 (PEVE…FQVS). A disulfide bridge links C357 with C415. Residue N432 is glycosylated (N-linked (GlcNAc...) asparagine). Disulfide bonds link C463-C514 and C560-C615. One can recognise a Fibronectin type-III domain in the interval 643–743 (TPNPTRSHKL…SRIIHYTEPI (101 aa)). Residues N655 and N747 are each glycosylated (N-linked (GlcNAc...) asparagine). The MAM domain maps to 751–918 (NTCHFEDEKI…VTLKKGECPR (168 aa)). A compositionally biased stretch (polar residues) spans 779–788 (LTQNPKRSPN). The segment at 779-798 (LTQNPKRSPNTGPPTDISGT) is disordered. An N-linked (GlcNAc...) asparagine glycan is attached at N826. The GPI-anchor amidated serine moiety is linked to residue S932. Positions 933 to 955 (GAPCQSSPQLWGPMAIFLLALQR) are cleaved as a propeptide — removed in mature form.

In terms of assembly, interacts heterophilically through its MAM domain with proteins in axon-rich regions and through its Ig-like domains with proteins in differentiating muscle. Interacts (through the Ig-like domains) with NLGN2. As to expression, has been found in brain, heart, skeletal muscle and kidney. Found to be overexpressed in tumor tissues.

The protein localises to the cell membrane. Required for radial migration of cortical neurons in the superficial layer of the neocortex. Plays a role in the formation or maintenance of inhibitory synapses. May function by inhibiting the activity of NLGN2. In Homo sapiens (Human), this protein is MAM domain-containing glycosylphosphatidylinositol anchor protein 1 (MDGA1).